We begin with the raw amino-acid sequence, 509 residues long: Dihydrolipoyl dehydrogenase, mitochondrial (509 aa).

The N-terminal 35 residues, 1–35, are a transit peptide targeting the mitochondrion; it reads MQSWSRVYCTLAKRGHFNRIAHGLQGVSAVPLRTY. Residue K66 is modified to N6-acetyllysine; alternate. At K66 the chain carries N6-succinyllysine; alternate. Residues 71–80 and K89 contribute to the FAD site; that span reads EKNETLGGTC. Residues C80 and C85 are joined by a disulfide bond. N6-acetyllysine; alternate occurs at positions 104, 122, 132, and 143. N6-succinyllysine; alternate occurs at positions 104, 122, 132, and 143. G154 is a binding site for FAD. 2 positions are modified to N6-succinyllysine: K159 and K166. Position 183 to 185 (183 to 185) interacts with FAD; the sequence is TGS. NAD(+)-binding positions include 220–227 and E243; that span reads GAGVIGVE. N6-succinyllysine occurs at positions 273 and 277. NAD(+) is bound at residue V278. Phosphoserine occurs at positions 285 and 297. G314 is an NAD(+) binding site. K346 is modified (N6-acetyllysine). Residues D355 and 361–364 contribute to the FAD site; that span reads MLAH. Residue K410 is modified to N6-acetyllysine; alternate. K410 carries the post-translational modification N6-succinyllysine; alternate. Residues K417 and K420 each carry the N6-acetyllysine modification. N6-succinyllysine is present on K430. H487 (proton acceptor) is an active-site residue. S502 carries the post-translational modification Phosphoserine. At K505 the chain carries N6-acetyllysine; alternate. Position 505 is an N6-succinyllysine; alternate (K505).

It belongs to the class-I pyridine nucleotide-disulfide oxidoreductase family. Homodimer. Part of the multimeric pyruvate dehydrogenase complex that contains multiple copies of pyruvate dehydrogenase (subunits PDHA (PDHA1 or PDHA2) and PDHB, E1), dihydrolipoamide acetyltransferase (DLAT, E2) and lipoamide dehydrogenase (DLD, E3). These subunits are bound to an inner core composed of about 48 DLAT and 12 PDHX molecules (by non covalent bonds). The 2-oxoglutarate dehydrogenase complex is composed of OGDH (2-oxoglutarate dehydrogenase; E1), DLST (dihydrolipoamide succinyltransferase; E2), DLD (dihydrolipoamide dehydrogenase; E3) and the assembly factor KGD4. It contains multiple copies of the three enzymatic components (E1, E2 and E3). In the nucleus, the 2-oxoglutarate dehydrogenase complex associates with KAT2A. Interacts with PDHX. Requires FAD as cofactor. In terms of processing, tyrosine phosphorylated. In terms of tissue distribution, expressed in heart (at protein level).

Its subcellular location is the mitochondrion matrix. It localises to the nucleus. The protein resides in the cell projection. The protein localises to the cilium. It is found in the flagellum. Its subcellular location is the cytoplasmic vesicle. It localises to the secretory vesicle. The protein resides in the acrosome. It catalyses the reaction N(6)-[(R)-dihydrolipoyl]-L-lysyl-[protein] + NAD(+) = N(6)-[(R)-lipoyl]-L-lysyl-[protein] + NADH + H(+). Its function is as follows. Lipoamide dehydrogenase is a component of the glycine cleavage system as well as an E3 component of three alpha-ketoacid dehydrogenase complexes (pyruvate-, alpha-ketoglutarate-, and branched-chain amino acid-dehydrogenase complex). The 2-oxoglutarate dehydrogenase complex is mainly active in the mitochondrion. A fraction of the 2-oxoglutarate dehydrogenase complex also localizes in the nucleus and is required for lysine succinylation of histones: associates with KAT2A on chromatin and provides succinyl-CoA to histone succinyltransferase KAT2A. In monomeric form may have additional moonlighting function as serine protease. Involved in the hyperactivation of spermatazoa during capacitation and in the spermatazoal acrosome reaction. This is Dihydrolipoyl dehydrogenase, mitochondrial (DLD) from Sus scrofa (Pig).